Consider the following 809-residue polypeptide: Eukaryotic translation initiation factor 3 subunit C (809 aa).

The interval 1 to 102 (MSRFFAASYE…DSDESDEASK (102 aa)) is disordered. Composition is skewed to acidic residues over residues 18 to 30 (SEED…EEEL) and 37 to 59 (SEEE…DSDD). The PCI domain occupies 605 to 780 (FHEHINLDLI…SVLSIAKGAE (176 aa)).

It belongs to the eIF-3 subunit C family. In terms of assembly, component of the eukaryotic translation initiation factor 3 (eIF-3) complex.

It localises to the cytoplasm. Functionally, component of the eukaryotic translation initiation factor 3 (eIF-3) complex, which is involved in protein synthesis of a specialized repertoire of mRNAs and, together with other initiation factors, stimulates binding of mRNA and methionyl-tRNAi to the 40S ribosome. The eIF-3 complex specifically targets and initiates translation of a subset of mRNAs involved in cell proliferation. The protein is Eukaryotic translation initiation factor 3 subunit C of Vanderwaltozyma polyspora (strain ATCC 22028 / DSM 70294 / BCRC 21397 / CBS 2163 / NBRC 10782 / NRRL Y-8283 / UCD 57-17) (Kluyveromyces polysporus).